The chain runs to 689 residues: Methionine--tRNA ligase (689 aa).

Residues 15–25 (PYANGPIHLGH) carry the 'HIGH' region motif. Zn(2+) contacts are provided by C146, C149, C159, and C162. The 'KMSKS' region signature appears at 332–336 (KMSKS). ATP is bound at residue K335. The 102-residue stretch at 588-689 (DFAKIDLRIA…EGAQPGMRVK (102 aa)) folds into the tRNA-binding domain.

It belongs to the class-I aminoacyl-tRNA synthetase family. MetG type 1 subfamily. As to quaternary structure, homodimer. Zn(2+) is required as a cofactor.

It localises to the cytoplasm. The catalysed reaction is tRNA(Met) + L-methionine + ATP = L-methionyl-tRNA(Met) + AMP + diphosphate. Its function is as follows. Is required not only for elongation of protein synthesis but also for the initiation of all mRNA translation through initiator tRNA(fMet) aminoacylation. The protein is Methionine--tRNA ligase of Shewanella baltica (strain OS155 / ATCC BAA-1091).